Consider the following 872-residue polypeptide: MQPTDPNKFTEKAWEAIAKTPEIAKQHRQQQIETEHLLSALLEQNGLATSIFNKAGASIPRVNDQVNSFIAQQPKLSNPSESIYLGRSLDKLLDNAEIAKSKYGDDYISIEHLMAAYGQDDRLGKNLYREIGLTENKLAEIIKQIRGTQKVTDQNPEGKYESLEKYGRDLTELAREGKLDPVIGRDEEVRRTIQILSRRTKNNPVLIGEPGVGKTAIAEGLAQRIINHDVPESLRDRKLISLDMGALIAGAKYRGEFEERLKAVLKEVTDSQGQIILFIDEIHTVVGAGATQGAMDAGNLLKPMLARGALRCIGATTLDEYRKYIEKDAALERRFQEVLVDEPNVLDTISILRGLKERYEVHHGVKIADSALVAAAMLSNRYISDRFLPDKAIDLVDEAAAKLKMEITSKPEELDEVDRKILQLEMERLSLQRENDSASKERLEKLEKELADFKEEQSKLNGQWQSEKTVIDQIRTVKETIDQVNLEIQQAQRDYDYNKAAELQYGKLTDLQRQVEALETQLAEQQTSGKSLLREEVLESDIAEIISKWTGIPISKLVESEKEKLLHLEDELHSRVIGQDEAVTAVAEAIQRSRAGLSDPNRPTASFIFLGPTGVGKTELAKALAKNLFDTEEALVRIDMSEYMEKHAVSRLMGAPPGYVGYEEGGQLTEAIRRRPYSVILFDEIEKAHGDVFNVMLQILDDGRLTDAQGHVVDFKNTIIIMTSNLGSQYILDVAGDDSRYEEMRSRVMDVMRENFRPEFLNRVDETIIFHGLQKSELRSIVQIQIQSLATRLEEQKLTLKLTDKALDFLAAVGYDPVYGARPLKRAVQKYLETAIAKGILRGDYKPGETIVVDETDERLSFTSLRGDLVIV.

Positions 6 to 148 (PNKFTEKAWE…AEIIKQIRGT (143 aa)) constitute a Clp R domain. Repeat stretches follow at residues 9 to 73 (FTEK…IAQQ) and 85 to 148 (LGRS…IRGT). Residues 161–342 (ESLEKYGRDL…RRFQEVLVDE (182 aa)) form an NBD1 region. 208-215 (GEPGVGKT) serves as a coordination point for ATP. The interval 343-551 (PNVLDTISIL…IAEIISKWTG (209 aa)) is linker. Residues 393 to 527 (IDLVDEAAAK…LETQLAEQQT (135 aa)) adopt a coiled-coil conformation. The tract at residues 561–772 (EKEKLLHLED…RVDETIIFHG (212 aa)) is NBD2. ATP is bound at residue 611-618 (GPTGVGKT). The C-terminal stretch occupies residues 773–872 (LQKSELRSIV…TSLRGDLVIV (100 aa)).

This sequence belongs to the ClpA/ClpB family. Homohexamer. The oligomerization is ATP-dependent.

It is found in the cytoplasm. In terms of biological role, part of a stress-induced multi-chaperone system, it is involved in the recovery of the cell from heat-induced damage, in cooperation with DnaK, DnaJ and GrpE. Acts before DnaK, in the processing of protein aggregates. Protein binding stimulates the ATPase activity; ATP hydrolysis unfolds the denatured protein aggregates, which probably helps expose new hydrophobic binding sites on the surface of ClpB-bound aggregates, contributing to the solubilization and refolding of denatured protein aggregates by DnaK. This Synechocystis sp. (strain ATCC 27184 / PCC 6803 / Kazusa) protein is Chaperone protein ClpB 2 (clpB2).